The following is a 307-amino-acid chain: HTH-type transcriptional regulator DmlR (307 aa).

The HTH lysR-type domain occupies 5–62 (PLLNDLRVFMLVARRAGFAAVAEELGVSPAFVSKRIALLEQTLNVVLLHRTTRRVTIT). Positions 22 to 41 (FAAVAEELGVSPAFVSKRIA) form a DNA-binding region, H-T-H motif.

Belongs to the LysR transcriptional regulatory family.

Its function is as follows. Transcriptional regulator required for the aerobic growth on D-malate as the sole carbon source. Induces the expression of dmlA in response to D-malate or L- or meso-tartrate. Negatively regulates its own expression. The protein is HTH-type transcriptional regulator DmlR (dmlR) of Escherichia coli (strain K12).